We begin with the raw amino-acid sequence, 393 residues long: G protein-activated inward rectifier potassium channel 3 (393 aa).

The interval 1 to 23 (MAQENAAFSPGQEEPPRRRGRQR) is disordered. The Cytoplasmic portion of the chain corresponds to 1–57 (MAQENAAFSPGQEEPPRRRGRQRYVEKDGRCNVQQGNVRETYRYLTDLFTTLVDLQW). Residues 58-82 (RLSLLFFVLAYALTWLFFGAIWWLI) form a helical membrane-spanning segment. Over 83 to 106 (AYGRGDLEHLEDTAWTPCVNNLNG) the chain is Extracellular. Residues 107-118 (FVAAFLFSIETE) constitute an intramembrane region (helical; Pore-forming). Residues 119 to 125 (TTIGYGH) constitute an intramembrane region (pore-forming). Positions 120 to 125 (TIGYGH) match the Selectivity filter motif. The Extracellular segment spans residues 126-134 (RVITDQCPE). The chain crosses the membrane as a helical span at residues 135-156 (GIVLLLLQAILGSMVNAFMVGC). Residues 157 to 393 (MFVKISQPNK…LPPPESESKV (237 aa)) lie on the Cytoplasmic side of the membrane. Residues 360–393 (KVEEEGAGEGAGGEAGADKEQNGCLPPPESESKV) are disordered. Pro residues predominate over residues 384–393 (LPPPESESKV). Residues 390-393 (ESKV) carry the PDZ-binding motif.

It belongs to the inward rectifier-type potassium channel (TC 1.A.2.1) family. KCNJ9 subfamily. As to quaternary structure, associates with KCNJ3/GIRK1 to form a G-protein-activated heteromultimer pore-forming unit. Interacts (via PDZ-binding motif) with SNX27 (via PDZ domain); the interaction is required when endocytosed to prevent degradation in lysosomes and promote recycling to the plasma membrane.

The protein resides in the membrane. It catalyses the reaction K(+)(in) = K(+)(out). Its function is as follows. Inward rectifier potassium channels are characterized by a greater tendency to allow potassium to flow into the cell rather than out of it. Their voltage dependence is regulated by the concentration of extracellular potassium; as external potassium is raised, the voltage range of the channel opening shifts to more positive voltages. The inward rectification is mainly due to the blockage of outward current by internal magnesium, This receptor is controlled by G proteins. Unable to produce channel activity when expressed alone. Forms a functional channel in association with KCNJ3/GIRK1. The sequence is that of G protein-activated inward rectifier potassium channel 3 (KCNJ9) from Homo sapiens (Human).